The chain runs to 40 residues: Metallothionein-1 (40 aa).

The protein belongs to the metallothionein superfamily. Type 5 family.

Its function is as follows. This protein binds cations of several transition elements. It is thought to be involved in detoxification processes. This is Metallothionein-1 (MtnA) from Drosophila ananassae (Fruit fly).